Here is a 142-residue protein sequence, read N- to C-terminus: Large ribosomal subunit protein uL13 (142 aa).

The protein belongs to the universal ribosomal protein uL13 family. As to quaternary structure, part of the 50S ribosomal subunit.

This protein is one of the early assembly proteins of the 50S ribosomal subunit, although it is not seen to bind rRNA by itself. It is important during the early stages of 50S assembly. This Chromobacterium violaceum (strain ATCC 12472 / DSM 30191 / JCM 1249 / CCUG 213 / NBRC 12614 / NCIMB 9131 / NCTC 9757 / MK) protein is Large ribosomal subunit protein uL13.